We begin with the raw amino-acid sequence, 63 residues long: Venom peptide U-reduvitoxin-Pp19 (63 aa).

The signal sequence occupies residues 1–23; that stretch reads MSPYSILFVVVIALCLLPESIVG. 3 disulfides stabilise this stretch: cysteine 15/cysteine 62, cysteine 25/cysteine 53, and cysteine 30/cysteine 61.

Hemolymph (at protein level). Also weakly expressed by the venom gland (at protein level).

Its subcellular location is the secreted. Its function is as follows. Toxin with insecticidal activity. High doses of recombinant toxin causes impaired motor behavior of D.melanogaster, which progress slowly to paralysis and death after several hours. This Pristhesancus plagipennis (Common assassin bug) protein is Venom peptide U-reduvitoxin-Pp19.